Consider the following 270-residue polypeptide: MAGLEVLFASAAPAITCAQDALVCFLHWEVVTHGYYGLGAGDQPGPNDKKSELLPVEWNSNKDLYVLRYESKDGSRKLLVKAVTVENSMIINVLEHGSQQVSDLTLNLNDYIDSEHLVDFHRVYKNSEELRSRIVSGIITPIHEQWEKANLSPHREFPPATAREVDPLRIHPQHPHTSRQPTWCDPLGPFAVGGEDLDPFGCRRGGMIVDPLRSGFPRALIDPSSGLPNRLPPGAVPPGARFDPFGPIGTSPSGPNPDHLPPPGYDDMYL.

Ala-2 is modified (N-acetylalanine). Residues 2–150 (AGLEVLFASA…PIHEQWEKAN (149 aa)) are important for homodimerization and interaction with FBXO7. Ser-152 is subject to Phosphoserine. Residue Arg-204 is modified to Omega-N-methylarginine. At Arg-218 the chain carries Asymmetric dimethylarginine. Positions 220–270 (LIDPSSGLPNRLPPGAVPPGARFDPFGPIGTSPSGPNPDHLPPPGYDDMYL) are disordered. Arg-230 carries the post-translational modification Omega-N-methylarginine. Phosphoserine is present on Ser-251. Positions 254–264 (GPNPDHLPPPG) are enriched in pro residues.

This sequence belongs to the proteasome inhibitor PI31 family. In terms of assembly, monomer and homodimer. Interacts with FBXO7.

The protein localises to the cytoplasm. It is found in the endoplasmic reticulum. Functionally, plays an important role in control of proteasome function. Inhibits the hydrolysis of protein and peptide substrates by the 20S proteasome. Also inhibits the activation of the proteasome by the proteasome regulatory proteins PA700 and PA28. The sequence is that of Proteasome inhibitor PI31 subunit (PSMF1) from Bos taurus (Bovine).